A 166-amino-acid polypeptide reads, in one-letter code: Mitochondrial translation release factor in rescue (166 aa).

The transit peptide at 1-35 directs the protein to the mitochondrion; it reads MSTVGLFHFPTPLTRICPAPWGLRLWEKLTLLSPG. Residues 57-121 are GGQ domain; sequence ENELEEQFVK…LQEKVDVFYN (65 aa). Residues 71–73 carry the GGQ motif; the sequence is GGQ. Residue Gln-73 is modified to N5-methylglutamine. Residues 122-148 form a disordered region; it reads GENSPVHKEKREAAKKKQERKKRAKET. A compositionally biased stretch (basic and acidic residues) spans 126 to 137; that stretch reads PVHKEKREAAKK. A coiled-coil region spans residues 127-160; the sequence is VHKEKREAAKKKQERKKRAKETLEKKKLLKELWE.

It belongs to the prokaryotic/mitochondrial release factor family. In terms of assembly, interacts (via C-terminus) with MTRES1 (via S4 domain). Associates with mitoribosomal S39 large subunit, peptidyl tRNA and nascent chain. Post-translationally, methylation of glutamine in the GGQ triplet by HEMK1. As to expression, expressed in all areas of the brain tested.

The protein resides in the mitochondrion. Part of a mitoribosome-associated quality control pathway that prevents aberrant translation by responding to interruptions during elongation. As heterodimer with MTRES1, ejects the unfinished nascent chain and peptidyl transfer RNA (tRNA), respectively, from stalled ribosomes. Recruitment of mitoribosome biogenesis factors to these quality control intermediates suggests additional roles for MTRES1 and MTRF during mitoribosome rescue. This is Mitochondrial translation release factor in rescue from Homo sapiens (Human).